The chain runs to 526 residues: AAA ATPase forming ring-shaped complexes (526 aa).

Positions 1 to 18 are enriched in polar residues; it reads MGDMASSTDPAAHNSFSD. The tract at residues 1-20 is disordered; it reads MGDMASSTDPAAHNSFSDFN. Residues 20 to 59 adopt a coiled-coil conformation; that stretch reads NREEMTRLADNVRSLQRTNQDLSARNTKLAEMLKSSRDKL. 257–262 contacts ATP; the sequence is GCGKTL.

Belongs to the AAA ATPase family. In terms of assembly, homohexamer. Assembles into a hexameric ring structure.

This Corynebacterium efficiens (strain DSM 44549 / YS-314 / AJ 12310 / JCM 11189 / NBRC 100395) protein is AAA ATPase forming ring-shaped complexes.